A 36-amino-acid polypeptide reads, in one-letter code: Pancreatic polypeptide (36 aa).

Residue tyrosine 36 is modified to Tyrosine amide.

The protein belongs to the NPY family.

The protein localises to the secreted. Hormone secreted by pancreatic cells that acts as a regulator of pancreatic and gastrointestinal functions probably by signaling through the G protein-coupled receptor NPY4R2. The polypeptide is Pancreatic polypeptide (PPY) (Ceratotherium simum (White rhinoceros)).